The sequence spans 93 residues: Small ribosomal subunit protein uS19 (93 aa).

This sequence belongs to the universal ribosomal protein uS19 family.

Protein S19 forms a complex with S13 that binds strongly to the 16S ribosomal RNA. The chain is Small ribosomal subunit protein uS19 from Leptospira borgpetersenii serovar Hardjo-bovis (strain JB197).